Reading from the N-terminus, the 431-residue chain is Acrosin (431 aa).

The first 16 residues, 1–16 (MLPTAVLLVLVVSVVA), serve as a signal peptide directing secretion. A glycan (N-linked (GlcNAc...) asparagine) is linked at asparagine 19. 6 disulfides stabilise this stretch: cysteine 22–cysteine 152, cysteine 26–cysteine 160, cysteine 71–cysteine 87, cysteine 175–cysteine 244, cysteine 207–cysteine 223, and cysteine 234–cysteine 264. The region spanning 40–288 (VVGGQAAQQG…FLDWIASRIG (249 aa)) is the Peptidase S1 domain. Residues histidine 86 and aspartate 140 each act as charge relay system in the active site. N-linked (GlcNAc...) asparagine glycosylation is present at asparagine 208. The active-site Charge relay system is the serine 238. The segment at 295-385 (IQPATPTPPT…PPPASTKPPQ (91 aa)) is disordered. Residues 331–341 (PHPHPHPHPHP) are compositionally biased toward basic residues. Over residues 342–381 (RPPQPPAAQAPPPPPPPPPPPPPPPPPPPPPPPPPPPAST) the composition is skewed to pro residues. A propeptide spans 351 to 431 (APPPPPPPPP…TEIPEVTLAS (81 aa)) (pro-rich).

It belongs to the peptidase S1 family. As to quaternary structure, heavy chain (catalytic) and a light chain linked by two disulfide bonds. Forms a heterodimer with SERPINA5.

The catalysed reaction is Preferential cleavage: Arg-|-Xaa, Lys-|-Xaa.. With respect to regulation, inhibited by SERPINA5. Functionally, acrosin is the major protease of mammalian spermatozoa. It is a serine protease of trypsin-like cleavage specificity, it is synthesized in a zymogen form, proacrosin and stored in the acrosome. In Oryctolagus cuniculus (Rabbit), this protein is Acrosin (ACR).